Reading from the N-terminus, the 399-residue chain is Elongation factor Tu (399 aa).

Residues 10–204 enclose the tr-type G domain; sequence KPHVNIGTIG…AVDASIPEPE (195 aa). The interval 19–26 is G1; it reads GHVDHGKT. 19 to 26 is a binding site for GTP; it reads GHVDHGKT. Thr26 lines the Mg(2+) pocket. Positions 60–64 are G2; the sequence is GITIN. The tract at residues 81-84 is G3; that stretch reads DCPG. GTP-binding positions include 81–85 and 136–139; these read DCPGH and NKCD. Residues 136–139 form a G4 region; that stretch reads NKCD. Residues 174-176 are G5; sequence SGL.

Belongs to the TRAFAC class translation factor GTPase superfamily. Classic translation factor GTPase family. EF-Tu/EF-1A subfamily. In terms of assembly, monomer.

The protein resides in the cytoplasm. The catalysed reaction is GTP + H2O = GDP + phosphate + H(+). GTP hydrolase that promotes the GTP-dependent binding of aminoacyl-tRNA to the A-site of ribosomes during protein biosynthesis. The sequence is that of Elongation factor Tu from Prochlorococcus marinus (strain SARG / CCMP1375 / SS120).